The sequence spans 1404 residues: ABC transporter G family member 47 (1404 aa).

The 268-residue stretch at 156–423 (GNALHITRKK…FQSIGFKCPE (268 aa)) folds into the ABC transporter 1 domain. 189 to 196 (GPPGSGKT) provides a ligand contact to ATP. Residues 501–714 (ELLQANIDRE…ALNTLAVNEF (214 aa)) enclose the ABC transmembrane type-2 1 domain. The next 7 helical transmembrane spans lie at 519-539 (FLYI…MTVF), 565-585 (MIMF…PVFF), 607-627 (TPIS…VIGF), 638-658 (FLAL…IASL), 663-683 (VVAS…SGFI), 692-712 (WWIW…LAVN), and 751-771 (VGAL…CLIF). Residues 808-1059 (ITFEDIKYSI…ELIRYFEAIE (252 aa)) form the ABC transporter 2 domain. Position 852–859 (852–859 (GVSGAGKT)) interacts with ATP. Residues 1132 to 1346 (TQCLACLWKQ…TLNGLVTSQF (215 aa)) form the ABC transmembrane type-2 2 domain. A run of 7 helical transmembrane segments spans residues 1152–1172 (IAVK…MFWG), 1183–1199 (LFSA…TMGV), 1239–1259 (LPYI…MIGY), 1266–1286 (FFWY…YGMM), 1298–1318 (TVVS…LIPL), 1321–1341 (IPIW…LNGL), and 1373–1393 (LLWV…FLFG).

The protein belongs to the ABC transporter superfamily. ABCG family. PDR (TC 3.A.1.205) subfamily.

It is found in the membrane. Functionally, may be a general defense protein. The sequence is that of ABC transporter G family member 47 from Oryza sativa subsp. japonica (Rice).